Reading from the N-terminus, the 166-residue chain is Mitochondrial inner membrane protease subunit 1 (166 aa).

Residues S40 and K83 contribute to the active site.

It belongs to the peptidase S26 family. IMP1 subfamily. In terms of assembly, heterodimer of 2 subunits, IMMPL1 and IMMPL2.

The protein localises to the mitochondrion inner membrane. Functionally, catalyzes the removal of transit peptides required for the targeting of proteins from the mitochondrial matrix, across the inner membrane, into the inter-membrane space. Known to process the nuclear encoded protein DIABLO. In Mus musculus (Mouse), this protein is Mitochondrial inner membrane protease subunit 1 (Immp1l).